The primary structure comprises 177 residues: R-phycoerythrin beta chain (177 aa).

Phycourobilin contacts are provided by Cys50 and Cys61. Asn72 is modified (N4-methylasparagine). The (2R,3E)-phycoerythrobilin site is built by Cys82 and Cys158.

This sequence belongs to the phycobiliprotein family. In terms of assembly, heterodimer of an alpha and a beta chain. In terms of processing, contains two covalently linked phycoerythrobilin chromophores and one covalently linked phycourobilin chromophore.

The protein localises to the plastid. It localises to the chloroplast thylakoid membrane. Functionally, light-harvesting photosynthetic bile pigment-protein from the phycobiliprotein complex. The protein is R-phycoerythrin beta chain (cpeB) of Porphyra purpurea (Red seaweed).